The chain runs to 460 residues: Heme sensor protein HssS (460 aa).

The next 2 helical transmembrane spans lie at 11 to 31 (IYTITVMIFSAVASFLCTNII) and 164 to 184 (IFLAILITLLLLFSIILVISS). An HAMP domain is found at 186 to 238 (YAIIKPIQQLKRATERLMHGNFDEVIHVTRKDEFGTLQYRFDKMRLSLKQLDD). Positions 246–456 (NVSHEIKTPL…TFTITFKKVP (211 aa)) constitute a Histidine kinase domain. At His-249 the chain carries Phosphohistidine; by autocatalysis.

Autophosphorylated.

Its subcellular location is the cell membrane. It catalyses the reaction ATP + protein L-histidine = ADP + protein N-phospho-L-histidine.. Its function is as follows. Member of the two-component regulatory system HssS/HssR involved in intracellular heme homeostasis and tempering of staphylococcal virulence. HssS functions as a heme sensor histidine kinase which is autophosphorylated at a histidine residue and transfers its phosphate group to an aspartate residue of HssR. HssR/HssS activates the expression of hrtAB, an efflux pump, in response to extracellular heme, hemin, hemoglobin or blood. The chain is Heme sensor protein HssS (hssS) from Staphylococcus saprophyticus subsp. saprophyticus (strain ATCC 15305 / DSM 20229 / NCIMB 8711 / NCTC 7292 / S-41).